A 316-amino-acid polypeptide reads, in one-letter code: Ornithine carbamoyltransferase (316 aa).

Carbamoyl phosphate-binding positions include 57 to 60 (STRT), glutamine 84, arginine 108, and 135 to 138 (HPCQ). L-ornithine is bound by residues asparagine 166, aspartate 230, and 234-235 (SM). Carbamoyl phosphate contacts are provided by residues 269–270 (CL) and arginine 297.

It belongs to the aspartate/ornithine carbamoyltransferase superfamily. OTCase family.

The protein resides in the cytoplasm. The catalysed reaction is carbamoyl phosphate + L-ornithine = L-citrulline + phosphate + H(+). The protein operates within amino-acid degradation; L-arginine degradation via ADI pathway; carbamoyl phosphate from L-arginine: step 2/2. In terms of biological role, reversibly catalyzes the transfer of the carbamoyl group from carbamoyl phosphate (CP) to the N(epsilon) atom of ornithine (ORN) to produce L-citrulline. The protein is Ornithine carbamoyltransferase of Bacillus cereus (strain AH187).